Consider the following 374-residue polypeptide: Probable carboxylesterase 4, mitochondrial (374 aa).

A mitochondrion-targeting transit peptide spans 1–52 (MLRRITCSSSLASPSLFLRFFRQLPRSYSSPTTIAVSGRNIRRLSTPTTLRC). The short motif at 135-137 (HGG) is the Involved in the stabilization of the negatively charged intermediate by the formation of the oxyanion hole element. Catalysis depends on residues Ser-219, Asp-317, and His-349.

The protein belongs to the 'GDXG' lipolytic enzyme family. In terms of tissue distribution, expressed in leaves, stems, flowers and siliques.

The protein localises to the mitochondrion. The catalysed reaction is a carboxylic ester + H2O = an alcohol + a carboxylate + H(+). Its function is as follows. Carboxylesterase acting on esters with varying acyl chain length. The protein is Probable carboxylesterase 4, mitochondrial (CXE4) of Arabidopsis thaliana (Mouse-ear cress).